The following is an 87-amino-acid chain: Small ribosomal subunit protein eS21 (87 aa).

The protein belongs to the eukaryotic ribosomal protein eS21 family. As to quaternary structure, component of the small ribosomal subunit. Mature ribosomes consist of a small (40S) and a large (60S) subunit. The 40S subunit contains about 33 different proteins and 1 molecule of RNA (18S). The 60S subunit contains about 49 different proteins and 3 molecules of RNA (25S, 5.8S and 5S).

It localises to the cytoplasm. Its function is as follows. Required for the processing of the 20S rRNA-precursor to mature 18S rRNA in a late step of the maturation of 40S ribosomal subunits. Has a physiological role leading to 18S rRNA stability. The protein is Small ribosomal subunit protein eS21 (RPS21) of Candida glabrata (strain ATCC 2001 / BCRC 20586 / JCM 3761 / NBRC 0622 / NRRL Y-65 / CBS 138) (Yeast).